We begin with the raw amino-acid sequence, 614 residues long: Subtilin transport ATP-binding protein SpaT (614 aa).

The next 5 helical transmembrane spans lie at 34–54 (FLKL…SLYI), 69–89 (VSIV…SELI), 147–167 (IIQA…SIAF), 175–195 (VSLL…KIGQ), and 267–287 (IAVQ…AFAG). An ABC transmembrane type-1 domain is found at 34 to 320 (FLKLIRFSII…IMTSIYSIYN (287 aa)). The 241-residue stretch at 353 to 593 (VVFQNVSFIY…CPLYKKMDES (241 aa)) folds into the ABC transporter domain. 387-394 (GPNGSGKK) is a binding site for ATP.

It belongs to the ABC transporter superfamily.

The protein resides in the cell membrane. In terms of biological role, probably implicated in the export process of the lantibiotic subtilin. In Bacillus subtilis, this protein is Subtilin transport ATP-binding protein SpaT (spaT).